The following is a 1630-amino-acid chain: Merozoite surface protein 1 (1630 aa).

Residues 1-19 (MKIIFFLCSFLFFIINTQC) form the signal peptide. The tract at residues 60-113 (TKGASAQSGTSGTSGTSGPSGPSGTSPSSRSNTLPRSNTSSGASPPADASDSDA) is disordered. The interval 67-84 (SGTSGTSGTSGPSGPSGT) is tripeptide SG(TP) repeat. Residues 67–88 (SGTSGTSGTSGPSGPSGTSPSS) show a composition bias toward low complexity. The span at 89–98 (RSNTLPRSNT) shows a compositional bias: polar residues. N97 carries an N-linked (GlcNAc...) asparagine glycan. Low complexity predominate over residues 99–108 (SSGASPPADA). Residue N259 is glycosylated (N-linked (GlcNAc...) asparagine). The interval 680 to 755 (KKNIKTEGQS…VPTPPAPVNN (76 aa)) is disordered. Composition is skewed to polar residues over residues 685 to 695 (TEGQSDNSEPS) and 702 to 713 (GQATTKPGQQAG). Residues 721-732 (VQAQAQEQKQAQ) are compositionally biased toward low complexity. N-linked (GlcNAc...) asparagine glycans are attached at residues N755, N759, N774, and N835. The tract at residues 884-906 (SMQPLSLTPQDKPEVSANDDTSH) is disordered. N-linked (GlcNAc...) asparagine glycans are attached at residues N911, N955, N1049, N1156, and N1165. Residues 993-1107 (QLSFDLYNKY…EESIQTEDNY (115 aa)) form a required for binding to host erythrocyte cell membrane region. Residues 1190 to 1203 (VSESGSDTLEQSQP) are compositionally biased toward polar residues. The interval 1190–1220 (VSESGSDTLEQSQPKKPASTHVGAESNTITT) is disordered. Residues N1436 and N1517 are each glycosylated (N-linked (GlcNAc...) asparagine). 2 EGF-like domains span residues 1521–1561 (HQCV…VENP) and 1562–1610 (NPTC…FCSS). 6 disulfide bridges follow: C1523–C1534, C1528–C1544, C1546–C1557, C1565–C1578, C1572–C1592, and C1594–C1608. S1609 is lipidated: GPI-anchor amidated serine. Positions 1610–1630 (SSNFLGISFLLILMLILYSFI) are cleaved as a propeptide — removed in mature form.

As to quaternary structure, forms a complex composed of subunits p83, p30, p38, and p42 which remain non-covalently associated; the complex is formed at the merozoite surface prior to egress from host erythrocytes. Forms a complex composed of processed MSP1 subunits, MSP6 subunit p36 and MSP7; the complex is formed at the merozoite surface prior to egress from host erythrocytes. Within the complex, interacts (via subunit p38) with MSP6 subunit p36 and (via subunits p83, p30 and p38) with MSP7 (via subunit p22). Forms a complex composed of MSP1, MSP6, DBLMSP1 and DBLMSP2. Within the complex, interacts (via subunit p38) with DBLMSP1 and DBLMSP2. Forms a complex composed of MSP1, and rhoptry proteins RhopH3, RAP1 and CLAG9/RhopH3. Within the complex, interacts (via subunits p42 and p19) with RhopH3 (via C-terminus). Forms a complex composed of MSP1, MSP6, MSP7, MSP9 and MSP3; within the complex, MSP6 and MSP9 mediate the binding to the host erythrocyte. Interacts (via subunits p19 and p42) with MSP9; the interaction is direct; MSP1 subunits p19 or p42, and MSP9 form a co-ligand complex that interacts with host SLC4A1/Band 3 protein. May interact with PFD6. Interacts with host spectrin. Interacts with host glycophorin GYPA in a sialic acid-independent manner. In terms of assembly, interacts with host proinflammatory cytokine S100P; the interaction blocks S100P inflammatory and chemotactic activities. As to quaternary structure, interacts with host SLC4A1/Band 3 (via 5ABC region) on the host erythrocyte surface in a sialic acid-independent manner. The p190 precursor is cleaved by SUB1 prior to merozoite egress into 4 subunits p83, p30, p38, and p42 which remain non-covalently associated. SUB1-mediated proteolytic cleavage occurs in an orderly manner; the first cleavage occurs at the p83/p30 site, followed by cleavage at the p30/p38 site, the last cleavage occurs at the p38/p42 site. The order of cleavage is essential for parasite viability. SUB1-mediated processing is essential for merozoite egress. In a second processing step during erythrocyte invasion, p42 is cleaved by SUB2 into p33 and p19; the latter remains attached to the merozoite surface via its GPI-anchor and stays on the surface during the subsequent ring stage.

Its subcellular location is the cell membrane. The protein resides in the secreted. The protein localises to the vacuole membrane. Its function is as follows. During the asexual blood stage, involved in merozoite egress from host erythrocytes possibly via its interaction with the host cytoskeleton protein spectrin resulting in the destabilization of the host cytoskeleton and thus leading to erythrocyte cell membrane rupture. Involved in the binding to host erythrocytes and is required for host erythrocyte invasion. In terms of biological role, by binding to host proinflammatory cytokine S100P may interfere with host immune responses. Functionally, involved in merozoite invasion of host erythrocytes. May play a role in the biogenesis and/or function of the food vacuole during the intraerythrocytic development. In Plasmodium falciparum (isolate K1 / Thailand), this protein is Merozoite surface protein 1.